A 234-amino-acid polypeptide reads, in one-letter code: Thymidine kinase, cytosolic (234 aa).

An N-acetylserine modification is found at serine 2. 2 positions are modified to phosphoserine: serine 2 and serine 13. Residues 26–33 (GPMFSGKS), 58–60 (DTR), and 97–100 (DEGQ) contribute to the ATP site. Glutamate 98 functions as the Proton acceptor in the catalytic mechanism. Substrate is bound at residue phenylalanine 128. 2 residues coordinate Zn(2+): cysteine 153 and cysteine 156. Substrate-binding positions include 172–176 (VEVIG) and tyrosine 181. The Zn(2+) site is built by cysteine 185 and cysteine 188. The KEN box motif lies at 203–205 (KEN). At serine 231 the chain carries Phosphoserine.

Belongs to the thymidine kinase family. In terms of assembly, homotetramer. Tetramerization from dimerization is induced by ATP and increases catalytic efficiency due to a high affinity for thymidine. Tetramerization is inhibited by phosphorylation at Ser-13. Interacts (via the KEN box) with FZR1. In terms of processing, phosphorylated on Ser-13 in mitosis. Phosphorylation of Ser-13 by CDK1 during mitosis reduces homotetramerization and catalytic efficiency when DNA replication is complete and intracellular TK1 is still present at a high level. Post-translationally, polyubiquitinated. Postmitosis, ubiquitination leads to proteasomal degradation. The KEN box sequence located at the C-terminal region targets for degradation by the anaphase promoting complex (APC/C) activated and rate-limited by FZR1.

It is found in the cytoplasm. It carries out the reaction thymidine + ATP = dTMP + ADP + H(+). Cell-cycle-regulated enzyme of importance in nucleotide metabolism. Catalyzes the first enzymatic step in the salvage pathway converting thymidine into thymidine monophosphate. Transcriptional regulation limits expression to the S phase of the cell cycle and transient expression coincides with the oscillation in the intracellular dTTP concentration. Also important for the activation of anticancer and antiviral nucleoside analog prodrugs such as 1-b-d-arabinofuranosylcytosine (AraC) and 3c-azido-3c-deoxythymidine (AZT). The chain is Thymidine kinase, cytosolic from Homo sapiens (Human).